We begin with the raw amino-acid sequence, 41 residues long: Large ribosomal subunit protein bL36 (41 aa).

It belongs to the bacterial ribosomal protein bL36 family.

This is Large ribosomal subunit protein bL36 from Bradyrhizobium diazoefficiens (strain JCM 10833 / BCRC 13528 / IAM 13628 / NBRC 14792 / USDA 110).